The primary structure comprises 215 residues: Ribonuclease T (215 aa).

Residues 20 to 194 (VVIDVETAGF…YDTERTAVLF (175 aa)) form the Exonuclease domain. The Mg(2+) site is built by Asp-23, Glu-25, His-181, and Asp-186. His-181 serves as the catalytic Proton donor/acceptor.

This sequence belongs to the RNase T family. In terms of assembly, homodimer. The cofactor is Mg(2+).

Functionally, trims short 3' overhangs of a variety of RNA species, leaving a one or two nucleotide 3' overhang. Responsible for the end-turnover of tRNA: specifically removes the terminal AMP residue from uncharged tRNA (tRNA-C-C-A). Also appears to be involved in tRNA biosynthesis. In Shigella boydii serotype 4 (strain Sb227), this protein is Ribonuclease T.